The sequence spans 504 residues: Putative F-box/FBD/LRR-repeat protein At3g59240 (504 aa).

In terms of domain architecture, F-box spans 7 to 60 (KDIISDLPEALICHLLSFVPTKEAALTSLLSEKWRYLFAFAPILDFDDSVWMQS). 7 LRR repeats span residues 69-95 (HRKF…SLNC), 145-171 (RIRT…DLSS), 173-198 (WFRD…TMSD), 286-312 (TNLF…TFCC), 329-354 (DKDV…VFKG), 369-396 (CLCK…KFGE), and 403-428 (DEEK…ILHY). Residues 382 to 427 (SSSPVKVLKILKFGEVASYFGDEEKQLELVKYFLETMPNLEQMILH) enclose the FBD domain.

The chain is Putative F-box/FBD/LRR-repeat protein At3g59240 from Arabidopsis thaliana (Mouse-ear cress).